Consider the following 110-residue polypeptide: Ribonuclease P protein component 4 (110 aa).

4 residues coordinate Zn(2+): Cys65, Cys68, Cys94, and Cys97.

The protein belongs to the eukaryotic/archaeal RNase P protein component 4 family. As to quaternary structure, consists of a catalytic RNA component and at least 4-5 protein subunits. Zn(2+) serves as cofactor.

It is found in the cytoplasm. It carries out the reaction Endonucleolytic cleavage of RNA, removing 5'-extranucleotides from tRNA precursor.. Part of ribonuclease P, a protein complex that generates mature tRNA molecules by cleaving their 5'-ends. This Methanococcus maripaludis (strain C5 / ATCC BAA-1333) protein is Ribonuclease P protein component 4.